We begin with the raw amino-acid sequence, 737 residues long: ARMADILLO BTB ARABIDOPSIS PROTEIN 1 (737 aa).

9 ARM repeats span residues 112–154 (DENV…KDCA), 165–212 (PGYQ…NIAH), 215–254 (PRIKTNIRVEGGIAPLVELLNFPDVKVQRAAAGALRTVSF), 257–296 (DENKSQIVELNALPTLVLMLQSQDSTVHGEAIGAIGNLVH), 299–338 (PDIKKEVIRAGALQPVIGLLSSTCLETQREAALLIGQFAA), 341–380 (SDCKVHIAQRGAITPLIKMLESSDEQVVEMSAFALGRLAQ), 382–421 (AHNQAGIAHRGGIISLLNLLDVKTGSVQHNAAFALYGLAD), 456–495 (LKRLQNKIHGPVLNQLLYLMRTAEKTVQIRIALALAHLCD), and 497–536 (KDGKLIFIDNNGVEFLLELLYFSSNKQQRYSSSALYELAK). In terms of domain architecture, BTB spans 568–635 (SDVTFLIDGK…IYSGRINIAK (68 aa)).

Forms a heterodimeric complex with TCP24. Interacts with the origin recognition complex (preRC) components ORC1A, ORC1B, CDT1A and CDT1B. Interacts with DUF7/AIP1. As to expression, weakly expressed in the emerging lateral roots and mainly expressed in the shoot apex, young leaves and flower buds.

The protein resides in the nucleus. It participates in protein modification; protein ubiquitination. Its function is as follows. May act as a substrate-specific adapter of an E3 ubiquitin-protein ligase complex (CUL3-RBX1-BTB) which mediates the ubiquitination and subsequent proteasomal degradation of target proteins. In association with TCP24, exerts a negative role in cell proliferation in leaves, possibly by inhibiting mitotic DNA replication. This chain is ARMADILLO BTB ARABIDOPSIS PROTEIN 1 (ABAP1), found in Arabidopsis thaliana (Mouse-ear cress).